The chain runs to 679 residues: uncharacterized protein (679 aa).

The next 12 helical transmembrane spans lie at 23-41 (YALR…AYYL), 46-65 (PYWA…GGVI), 72-90 (IAGS…GHTL), 94-113 (WLFL…ACAH), 120-142 (YAFQ…IVEI), 157-179 (IVGI…GTAL), 362-381 (WSGV…SIGA), 385-404 (SGPG…SIVA), 411-433 (SLLM…GLMV), 438-455 (LWQF…MQLL), 462-481 (LAGL…AVTN), and 496-515 (AKIV…RPGS).

This sequence belongs to the aromatic acid exporter ArAE (TC 2.A.85) family.

The protein localises to the cell membrane. This is an uncharacterized protein from Salmonella typhimurium (strain LT2 / SGSC1412 / ATCC 700720).